The chain runs to 109 residues: MAFASVLKDAEITAALDGCKAAGSFDHKKFFKACGLSGKSADEVKKAFAIIDQDKSGYIEEEELKLFLQNFKAGARALSDAETKAFLKAGDSDGDGKIGVDEFAAMIKG.

Residue Ala2 is modified to N-acetylalanine. 2 EF-hand domains span residues 39–74 and 78–109; these read KSADEVKKAFAIIDQDKSGYIEEEELKLFLQNFKAG and LSDAETKAFLKAGDSDGDGKIGVDEFAAMIKG. 11 residues coordinate Ca(2+): Asp52, Asp54, Ser56, Tyr58, Glu60, Glu63, Asp91, Asp93, Asp95, Lys97, and Glu102.

It belongs to the parvalbumin family. Post-translationally, the N-terminus is blocked.

In muscle, parvalbumin is thought to be involved in relaxation after contraction. It binds two calcium ions. This Scomber scombrus (Atlantic mackerel) protein is Parvalbumin beta.